A 735-amino-acid chain; its full sequence is 1,4-alpha-glucan branching enzyme GlgB (735 aa).

Asp418 acts as the Nucleophile in catalysis. Glu471 serves as the catalytic Proton donor.

This sequence belongs to the glycosyl hydrolase 13 family. GlgB subfamily. Monomer.

The enzyme catalyses Transfers a segment of a (1-&gt;4)-alpha-D-glucan chain to a primary hydroxy group in a similar glucan chain.. It participates in glycan biosynthesis; glycogen biosynthesis. Its function is as follows. Catalyzes the formation of the alpha-1,6-glucosidic linkages in glycogen by scission of a 1,4-alpha-linked oligosaccharide from growing alpha-1,4-glucan chains and the subsequent attachment of the oligosaccharide to the alpha-1,6 position. In Agrobacterium fabrum (strain C58 / ATCC 33970) (Agrobacterium tumefaciens (strain C58)), this protein is 1,4-alpha-glucan branching enzyme GlgB.